Reading from the N-terminus, the 338-residue chain is Methionine import ATP-binding protein MetN 2 (338 aa).

The 241-residue stretch at 2 to 242 (IQLEGVSVDF…PQHAFTRQLV (241 aa)) folds into the ABC transporter domain. 39-46 (GTSGAGKS) provides a ligand contact to ATP.

This sequence belongs to the ABC transporter superfamily. Methionine importer (TC 3.A.1.24) family. As to quaternary structure, the complex is composed of two ATP-binding proteins (MetN), two transmembrane proteins (MetI) and a solute-binding protein (MetQ).

It is found in the cell inner membrane. It catalyses the reaction L-methionine(out) + ATP + H2O = L-methionine(in) + ADP + phosphate + H(+). It carries out the reaction D-methionine(out) + ATP + H2O = D-methionine(in) + ADP + phosphate + H(+). Part of the ABC transporter complex MetNIQ involved in methionine import. Responsible for energy coupling to the transport system. In Pectobacterium atrosepticum (strain SCRI 1043 / ATCC BAA-672) (Erwinia carotovora subsp. atroseptica), this protein is Methionine import ATP-binding protein MetN 2.